Here is a 448-residue protein sequence, read N- to C-terminus: Squalene synthase ERG9 (448 aa).

Residues 420-440 traverse the membrane as a helical segment; it reads RIEPGNFNCNVVLFGIGALIL.

The protein belongs to the phytoene/squalene synthase family. Mg(2+) is required as a cofactor.

It localises to the endoplasmic reticulum membrane. Its subcellular location is the microsome. The catalysed reaction is 2 (2E,6E)-farnesyl diphosphate + NADPH + H(+) = squalene + 2 diphosphate + NADP(+). It carries out the reaction 2 (2E,6E)-farnesyl diphosphate + NADH + H(+) = squalene + 2 diphosphate + NAD(+). It functions in the pathway terpene metabolism; lanosterol biosynthesis; lanosterol from farnesyl diphosphate: step 1/3. Functionally, squalene synthase; part of the third module of ergosterol biosynthesis pathway that includes the late steps of the pathway. ERG9 produces squalene from 2 farnesyl pyrophosphate moieties. The third module or late pathway involves the ergosterol synthesis itself through consecutive reactions that mainly occur in the endoplasmic reticulum (ER) membrane. Firstly, the squalene synthase ERG9 catalyzes the condensation of 2 farnesyl pyrophosphate moieties to form squalene, which is the precursor of all steroids. Squalene synthase is crucial for balancing the incorporation of farnesyl diphosphate (FPP) into sterol and nonsterol isoprene synthesis. Secondly, the squalene epoxidase ERG1 catalyzes the stereospecific oxidation of squalene to (S)-2,3-epoxysqualene, which is considered to be a rate-limiting enzyme in steroid biosynthesis. Then, the lanosterol synthase ERG7 catalyzes the cyclization of (S)-2,3 oxidosqualene to lanosterol, a reaction that forms the sterol core. In the next steps, lanosterol is transformed to zymosterol through a complex process involving various demethylation, reduction and desaturation reactions. The lanosterol 14-alpha-demethylase ERG11 (also known as CYP51) catalyzes C14-demethylation of lanosterol to produce 4,4'-dimethyl cholesta-8,14,24-triene-3-beta-ol, which is critical for ergosterol biosynthesis. The C-14 reductase ERG24 reduces the C14=C15 double bond of 4,4-dimethyl-cholesta-8,14,24-trienol to produce 4,4-dimethyl-cholesta-8,24-dienol. 4,4-dimethyl-cholesta-8,24-dienol is substrate of the C-4 demethylation complex ERG25-ERG26-ERG27 in which ERG25 catalyzes the three-step monooxygenation required for the demethylation of 4,4-dimethyl and 4alpha-methylsterols, ERG26 catalyzes the oxidative decarboxylation that results in a reduction of the 3-beta-hydroxy group at the C-3 carbon to an oxo group, and ERG27 is responsible for the reduction of the keto group on the C-3. ERG28 has a role as a scaffold to help anchor ERG25, ERG26 and ERG27 to the endoplasmic reticulum and ERG29 regulates the activity of the iron-containing C4-methylsterol oxidase ERG25. Then, the sterol 24-C-methyltransferase ERG6 catalyzes the methyl transfer from S-adenosyl-methionine to the C-24 of zymosterol to form fecosterol. The C-8 sterol isomerase ERG2 catalyzes the reaction which results in unsaturation at C-7 in the B ring of sterols and thus converts fecosterol to episterol. The sterol-C5-desaturase ERG3 then catalyzes the introduction of a C-5 double bond in the B ring to produce 5-dehydroepisterol. The C-22 sterol desaturase ERG5 further converts 5-dehydroepisterol into ergosta-5,7,22,24(28)-tetraen-3beta-ol by forming the C-22(23) double bond in the sterol side chain. Finally, ergosta-5,7,22,24(28)-tetraen-3beta-ol is substrate of the C-24(28) sterol reductase ERG4 to produce ergosterol. This is Squalene synthase ERG9 from Candida albicans (Yeast).